Reading from the N-terminus, the 429-residue chain is MNFSESERLQQLSNEYILGGVNSPSRSYKAVGGGAPVVMKEGRGAYLYDVDGNKFIDYLQAYGPIITGHAHPHITKAIQEQAAKGVLFGTPTELEIEFSKKLRDAIPSLEKIRFVNSGTEAVMTTIRVARAYTKRNKIIKFAGSYHGHSDLVLVAAGSGPSQLGSPDSAGVPESVAREVITVPFNDINAYKEAIEFWGDEIAAVLVEPIVGNFGMVMPQPGFLEEVNEISHNNGTLVIYDEVITAFRFHYGAAQDLLGVIPDLTAFGKIVGGGLPIGGYGGRQDIMEQVAPLGPAYQAGTMAGNPLSMKAGIALLEVLEQDGVYEKLDSLGQQLEEGLLKLIEKHNITATINRIYGSLTLYFTDEKVTHYDQVEHSDGEAFGKFFKLMLNQGINLAPSKFEAWFLTTEHTEEDIKQTLKAADYAFSQMK.

Lysine 268 is modified (N6-(pyridoxal phosphate)lysine).

This sequence belongs to the class-III pyridoxal-phosphate-dependent aminotransferase family. HemL subfamily. Homodimer. It depends on pyridoxal 5'-phosphate as a cofactor.

The protein resides in the cytoplasm. The catalysed reaction is (S)-4-amino-5-oxopentanoate = 5-aminolevulinate. It functions in the pathway porphyrin-containing compound metabolism; protoporphyrin-IX biosynthesis; 5-aminolevulinate from L-glutamyl-tRNA(Glu): step 2/2. The chain is Glutamate-1-semialdehyde 2,1-aminomutase 2 from Staphylococcus aureus (strain bovine RF122 / ET3-1).